A 212-amino-acid chain; its full sequence is Protein-L-isoaspartate O-methyltransferase (212 aa).

Ser-60 is an active-site residue.

Belongs to the methyltransferase superfamily. L-isoaspartyl/D-aspartyl protein methyltransferase family.

The protein resides in the cytoplasm. It catalyses the reaction [protein]-L-isoaspartate + S-adenosyl-L-methionine = [protein]-L-isoaspartate alpha-methyl ester + S-adenosyl-L-homocysteine. Its function is as follows. Catalyzes the methyl esterification of L-isoaspartyl residues in peptides and proteins that result from spontaneous decomposition of normal L-aspartyl and L-asparaginyl residues. It plays a role in the repair and/or degradation of damaged proteins. The sequence is that of Protein-L-isoaspartate O-methyltransferase from Methylorubrum populi (strain ATCC BAA-705 / NCIMB 13946 / BJ001) (Methylobacterium populi).